The primary structure comprises 303 residues: Lipoyl synthase (303 aa).

Residues Cys34, Cys39, Cys45, Cys60, Cys64, Cys67, and Ser273 each coordinate [4Fe-4S] cluster. Residues 46–262 form the Radical SAM core domain; the sequence is WSKKHATVMI…ERVARTKGFL (217 aa).

This sequence belongs to the radical SAM superfamily. Lipoyl synthase family. Requires [4Fe-4S] cluster as cofactor.

The protein resides in the cytoplasm. The catalysed reaction is [[Fe-S] cluster scaffold protein carrying a second [4Fe-4S](2+) cluster] + N(6)-octanoyl-L-lysyl-[protein] + 2 oxidized [2Fe-2S]-[ferredoxin] + 2 S-adenosyl-L-methionine + 4 H(+) = [[Fe-S] cluster scaffold protein] + N(6)-[(R)-dihydrolipoyl]-L-lysyl-[protein] + 4 Fe(3+) + 2 hydrogen sulfide + 2 5'-deoxyadenosine + 2 L-methionine + 2 reduced [2Fe-2S]-[ferredoxin]. Its pathway is protein modification; protein lipoylation via endogenous pathway; protein N(6)-(lipoyl)lysine from octanoyl-[acyl-carrier-protein]: step 2/2. Functionally, catalyzes the radical-mediated insertion of two sulfur atoms into the C-6 and C-8 positions of the octanoyl moiety bound to the lipoyl domains of lipoate-dependent enzymes, thereby converting the octanoylated domains into lipoylated derivatives. This is Lipoyl synthase from Rickettsia bellii (strain OSU 85-389).